Reading from the N-terminus, the 404-residue chain is Protein IQ-DOMAIN 12 (404 aa).

A calmodulin-binding region spans residues 8-25 (FGWMKRLFICEAKARAEK). The short motif at 11 to 18 (MKRLFICE) is the Nuclear localization signal 1 element. IQ domains lie at 108–135 (NVAA…ALVR) and 136–158 (LQAI…SSHS). A Nuclear localization signal 2 motif is present at residues 226-233 (IKRDRMLK).

Belongs to the IQD family. Binds to multiple calmodulin (CaM) in the presence of Ca(2+) and CaM-like proteins.

It localises to the nucleus. It is found in the cell membrane. Functionally, may be involved in cooperative interactions with calmodulins or calmodulin-like proteins. Recruits calmodulin proteins to microtubules, thus being a potential scaffold in cellular signaling and trafficking. May associate with nucleic acids and regulate gene expression at the transcriptional or post-transcriptional level. This chain is Protein IQ-DOMAIN 12, found in Arabidopsis thaliana (Mouse-ear cress).